A 259-amino-acid chain; its full sequence is uncharacterized protein (259 aa).

The first 22 residues, M1–G22, serve as a signal peptide directing secretion. The N-palmitoyl cysteine moiety is linked to residue C23. C23 carries the S-diacylglycerol cysteine lipid modification.

It belongs to the staphylococcal tandem lipoprotein family.

The protein resides in the cell membrane. This is an uncharacterized protein from Staphylococcus epidermidis (strain ATCC 35984 / DSM 28319 / BCRC 17069 / CCUG 31568 / BM 3577 / RP62A).